A 732-amino-acid chain; its full sequence is Polyribonucleotide nucleotidyltransferase (732 aa).

Positions 489 and 495 each coordinate Mg(2+). Positions 556–615 (PKIDTIQIDVDKIKIVIGKGGETIDKIIAETGVKIDIDEEGLVQIFSSDQAAIDRTKEII) constitute a KH domain. The region spanning 625–693 (GEVYHAKVVR…DKGRVDASMK (69 aa)) is the S1 motif domain. A disordered region spans residues 691–732 (SMKALIPRPPKPEKKEEKASEAKEASNDQASKSQSETASEEK). Residues 700–716 (PKPEKKEEKASEAKEAS) are compositionally biased toward basic and acidic residues. Over residues 717–732 (NDQASKSQSETASEEK) the composition is skewed to polar residues.

It belongs to the polyribonucleotide nucleotidyltransferase family. It depends on Mg(2+) as a cofactor.

The protein localises to the cytoplasm. It carries out the reaction RNA(n+1) + phosphate = RNA(n) + a ribonucleoside 5'-diphosphate. Involved in mRNA degradation. Catalyzes the phosphorolysis of single-stranded polyribonucleotides processively in the 3'- to 5'-direction. This is Polyribonucleotide nucleotidyltransferase from Streptococcus uberis (strain ATCC BAA-854 / 0140J).